The following is a 92-amino-acid chain: Acylphosphatase (92 aa).

Residues 5-90 enclose the Acylphosphatase-like domain; sequence TYRLVICGLV…GDFVGFQLRE (86 aa). Active-site residues include Arg-20 and Asn-38.

The protein belongs to the acylphosphatase family.

It carries out the reaction an acyl phosphate + H2O = a carboxylate + phosphate + H(+). This is Acylphosphatase (acyP) from Albidiferax ferrireducens (strain ATCC BAA-621 / DSM 15236 / T118) (Rhodoferax ferrireducens).